The primary structure comprises 117 residues: Prefoldin subunit beta (117 aa).

This sequence belongs to the prefoldin subunit beta family. Heterohexamer of two alpha and four beta subunits.

Its subcellular location is the cytoplasm. In terms of biological role, molecular chaperone capable of stabilizing a range of proteins. Seems to fulfill an ATP-independent, HSP70-like function in archaeal de novo protein folding. The polypeptide is Prefoldin subunit beta (Thermococcus kodakarensis (strain ATCC BAA-918 / JCM 12380 / KOD1) (Pyrococcus kodakaraensis (strain KOD1))).